The following is a 126-amino-acid chain: Small ribosomal subunit protein uS12 (126 aa).

Residue aspartate 89 is modified to 3-methylthioaspartic acid.

Belongs to the universal ribosomal protein uS12 family. As to quaternary structure, part of the 30S ribosomal subunit. Contacts proteins S8 and S17. May interact with IF1 in the 30S initiation complex.

Its function is as follows. With S4 and S5 plays an important role in translational accuracy. Functionally, interacts with and stabilizes bases of the 16S rRNA that are involved in tRNA selection in the A site and with the mRNA backbone. Located at the interface of the 30S and 50S subunits, it traverses the body of the 30S subunit contacting proteins on the other side and probably holding the rRNA structure together. The combined cluster of proteins S8, S12 and S17 appears to hold together the shoulder and platform of the 30S subunit. This is Small ribosomal subunit protein uS12 from Sulfurimonas denitrificans (strain ATCC 33889 / DSM 1251) (Thiomicrospira denitrificans (strain ATCC 33889 / DSM 1251)).